We begin with the raw amino-acid sequence, 134 residues long: Bet1-like protein At1g29060 (134 aa).

Gly residues predominate over residues 1-12; it reads MASNRGAGGSLY. The tract at residues 1-31 is disordered; it reads MASNRGAGGSLYGGADPYRSREGLSTRNASG. Residues 1–110 lie on the Cytoplasmic side of the membrane; it reads MASNRGAGGS…LSIIRSGNNH (110 aa). The t-SNARE coiled-coil homology domain maps to 40–102; it reads DPMHSDLDDE…KNNIRKLNLS (63 aa). The chain crosses the membrane as a helical; Anchor for type IV membrane protein span at residues 111-131; the sequence is IMHVVLFALLLFFILYMWSKM. At 132–134 the chain is on the vesicular side; sequence FKR.

The protein belongs to the BET1 family.

It localises to the golgi apparatus membrane. The protein localises to the endoplasmic reticulum membrane. Required for vesicular transport from the ER to the Golgi complex. Functions as a SNARE associated with ER-derived vesicles. The polypeptide is Bet1-like protein At1g29060 (Arabidopsis thaliana (Mouse-ear cress)).